The primary structure comprises 74 residues: UPF0291 protein EF_0064 (74 aa).

The interval 53–74 (YDPTGEDVTPEKLKEEQQKYFD) is disordered. The span at 61-74 (TPEKLKEEQQKYFD) shows a compositional bias: basic and acidic residues.

It belongs to the UPF0291 family.

It localises to the cytoplasm. This Enterococcus faecalis (strain ATCC 700802 / V583) protein is UPF0291 protein EF_0064.